Here is a 299-residue protein sequence, read N- to C-terminus: Small ribosomal subunit protein uS2 (299 aa).

Residues 227 to 299 form a disordered region; the sequence is SERKSEKSTK…DKAKASNEEE (73 aa).

It belongs to the universal ribosomal protein uS2 family.

This is Small ribosomal subunit protein uS2 from Christiangramia forsetii (strain DSM 17595 / CGMCC 1.15422 / KT0803) (Gramella forsetii).